A 443-amino-acid chain; its full sequence is Crinkler effector protein 161 (443 aa).

Positions M1–Q17 are cleaved as a signal peptide. Residues V18 to K56 are LQLFLAK domain. Residues E57–I126 are DWL domain. An HVLVXXP motif motif is present at residues H127–P133. An effector domain region spans residues E134–N439. Short sequence motifs (nuclear localization signal) lie at residues A161–H170 and H384–S393.

It belongs to the Crinkler effector family.

It localises to the secreted. The protein localises to the host nucleus. In terms of biological role, secreted effector that exhibits strong cell death suppression activity and suppresses cell death induced by a variety of effectors including CRN63, Avh241 and Avr3a. Protects host plants from biotic and abiotic stresses such as salinity and drought by up-regulation of many defense-related genes, including ABC transporters, Cytochrome P450 monooxygenases and receptor-like kinases (RLKs). Also enhances resistance to Phytophtora pathogens. The chain is Crinkler effector protein 161 from Phytophthora sojae (strain P6497) (Soybean stem and root rot agent).